Reading from the N-terminus, the 250-residue chain is MPLPLLNCDMGESFGNWKMGLDDEVMPYVDCANIACGFHASDPGIMRRTVALAVQHGVRVGAHPAYPDLQGFGRRSLACSPREVEDMMLYQIGALEGMCRAEGTRVAYVKPHGALYNDMARDPELLRGAMRAVLAYDPELPLLAMATADPAPMRALAEEMGVTLWFETFADRAYDPQGRLVSRREPGAVHHDREAIVAQAVTLARGEPLTANDGSLLHLPADTLCVHGDNAESVAAVRAIRDAFDGLARE.

It belongs to the LamB/PxpA family. In terms of assembly, forms a complex composed of PxpA, PxpB and PxpC.

The catalysed reaction is 5-oxo-L-proline + ATP + 2 H2O = L-glutamate + ADP + phosphate + H(+). Catalyzes the cleavage of 5-oxoproline to form L-glutamate coupled to the hydrolysis of ATP to ADP and inorganic phosphate. This chain is 5-oxoprolinase subunit A, found in Chromohalobacter salexigens (strain ATCC BAA-138 / DSM 3043 / CIP 106854 / NCIMB 13768 / 1H11).